Here is a 261-residue protein sequence, read N- to C-terminus: uncharacterized protein (261 aa).

The first 20 residues, 1 to 20, serve as a signal peptide directing secretion; sequence MKIQVMLIIIFVGIFTICLA. 2 N-linked (GlcNAc...) asparagine; by host glycosylation sites follow: Asn-22 and Asn-27.

Its subcellular location is the secreted. This is an uncharacterized protein from Acanthamoeba polyphaga (Amoeba).